The chain runs to 368 residues: DNA replication and repair protein RecF (368 aa).

30 to 37 (GDNGAGKT) contributes to the ATP binding site.

Belongs to the RecF family.

The protein localises to the cytoplasm. In terms of biological role, the RecF protein is involved in DNA metabolism; it is required for DNA replication and normal SOS inducibility. RecF binds preferentially to single-stranded, linear DNA. It also seems to bind ATP. This Xanthomonas euvesicatoria pv. vesicatoria (strain 85-10) (Xanthomonas campestris pv. vesicatoria) protein is DNA replication and repair protein RecF.